A 303-amino-acid chain; its full sequence is MNALTSLKLIDGKATAARVLAEVREQVQELRQGGVQPGLVVVLVGADAASQVYVRNKVLRAEEVGIRSQEHRLPADTTQAHLLTLIDRLNRDPEVNGILVQLPLPAHIDEHCVLQAINPLKDVDGFHSENVGGLAQGRDVLTPCTPSGCMRLLRDACGELRGKHAVVVGRSNIVGKPMAALLLQADCTVTVVHSRSRDLPALCRQADILVAAVGKPRLIGADCLKPGAVVIDVGINRINEDGQNHLVGDVDFAAALPQVAGITPVPGGVGPMTIAYLMKNTLLALDLQQQAAHQERTACLSPC.

Residues 169–171 (GRS), Ser194, and Ile235 contribute to the NADP(+) site.

The protein belongs to the tetrahydrofolate dehydrogenase/cyclohydrolase family. Homodimer.

The enzyme catalyses (6R)-5,10-methylene-5,6,7,8-tetrahydrofolate + NADP(+) = (6R)-5,10-methenyltetrahydrofolate + NADPH. It carries out the reaction (6R)-5,10-methenyltetrahydrofolate + H2O = (6R)-10-formyltetrahydrofolate + H(+). It participates in one-carbon metabolism; tetrahydrofolate interconversion. Its function is as follows. Catalyzes the oxidation of 5,10-methylenetetrahydrofolate to 5,10-methenyltetrahydrofolate and then the hydrolysis of 5,10-methenyltetrahydrofolate to 10-formyltetrahydrofolate. The sequence is that of Bifunctional protein FolD 2 from Pseudomonas putida (strain GB-1).